The primary structure comprises 55 residues: Mannose/glucose-specific lectin alpha chain (55 aa).

Belongs to the leguminous lectin family. As to quaternary structure, tetramer of two alpha and two beta chains.

The chain is Mannose/glucose-specific lectin alpha chain from Lathyrus sativus (White vetchling).